Consider the following 120-residue polypeptide: MVKLTSIAAGVAAIAATASATTTLAQSDERVNLVELGVYVSDIRAHLAQYYSFQAAHPTETYPIEVAEAVFNYGDFTTMLTGIAPDQVTRMITGVPWYSSRLKPAISSALSKDGIYTIAN.

Residues 7 to 24 (IAAGVAAIAATASATTTL) form a helical membrane-spanning segment.

The protein belongs to the SRP1/TIP1 family. Seripauperin subfamily.

It localises to the membrane. The chain is Seripauperin-2 (PAU2) from Saccharomyces cerevisiae (strain ATCC 204508 / S288c) (Baker's yeast).